The chain runs to 361 residues: MKQVTVALLFGGRSAEHEISIISAQSVARHINPDHYRVVPIYITRNGRWYSEGIASSILELDIAALIRKSGTAAASLKLQEMVLASGQQPFSFTFAGIDIAFPILHGSYGEDGRIQGFLDTVAIPYTGCGVTASALTMDKALSKLCVSEAGIAVAPGVTVLAGDWEKSPEQILSSIPETLIYPVFVKPAHLGSSVGISKVSVQGELPEALAHACNLDTKVLIEQAMHGKEIEVAVLGNNDPIASACGEIEPGSDFYDYDDKYIHNTAKLFIPARLPEELSRRVQADALTAYRALGCRGMARVDFFVDEKSGQVVFNEINTIPGFTDISMYPQLMEAAGIAFPELCDRLLQLALEPEQPAKT.

An ATP-grasp domain is found at 144–350 (KLCVSEAGIA…FPELCDRLLQ (207 aa)). 177–232 (PETLIYPVFVKPAHLGSSVGISKVSVQGELPEALAHACNLDTKVLIEQAMHGKEIE) is a binding site for ATP. Asp-303, Glu-317, and Asn-319 together coordinate Mg(2+).

Belongs to the D-alanine--D-alanine ligase family. The cofactor is Mg(2+). Mn(2+) serves as cofactor.

The protein resides in the cytoplasm. The enzyme catalyses 2 D-alanine + ATP = D-alanyl-D-alanine + ADP + phosphate + H(+). The protein operates within cell wall biogenesis; peptidoglycan biosynthesis. Cell wall formation. The polypeptide is D-alanine--D-alanine ligase (Chlorobium phaeovibrioides (strain DSM 265 / 1930) (Prosthecochloris vibrioformis (strain DSM 265))).